A 488-amino-acid polypeptide reads, in one-letter code: Proline--tRNA ligase (488 aa).

Belongs to the class-II aminoacyl-tRNA synthetase family. ProS type 3 subfamily. In terms of assembly, homodimer.

It localises to the cytoplasm. It carries out the reaction tRNA(Pro) + L-proline + ATP = L-prolyl-tRNA(Pro) + AMP + diphosphate. Functionally, catalyzes the attachment of proline to tRNA(Pro) in a two-step reaction: proline is first activated by ATP to form Pro-AMP and then transferred to the acceptor end of tRNA(Pro). The sequence is that of Proline--tRNA ligase from Pyrobaculum islandicum (strain DSM 4184 / JCM 9189 / GEO3).